Here is a 471-residue protein sequence, read N- to C-terminus: 3-isopropylmalate dehydratase large subunit (471 aa).

Residues C347, C409, and C412 each coordinate [4Fe-4S] cluster.

Belongs to the aconitase/IPM isomerase family. LeuC type 1 subfamily. Heterodimer of LeuC and LeuD. The cofactor is [4Fe-4S] cluster.

The catalysed reaction is (2R,3S)-3-isopropylmalate = (2S)-2-isopropylmalate. It participates in amino-acid biosynthesis; L-leucine biosynthesis; L-leucine from 3-methyl-2-oxobutanoate: step 2/4. Catalyzes the isomerization between 2-isopropylmalate and 3-isopropylmalate, via the formation of 2-isopropylmaleate. This chain is 3-isopropylmalate dehydratase large subunit, found in Buchnera aphidicola subsp. Rhopalosiphum padi.